The following is a 923-amino-acid chain: SPX and EXS domain-containing protein 1 (923 aa).

The SPX domain occupies 1-326; the sequence is MKFGKKLRFE…PMNSSIKLDQ (326 aa). Composition is skewed to low complexity over residues 94-147 and 186-195; these read QEQS…QQQQ and TTTTTTTTTT. 2 disordered regions span residues 94-150 and 185-208; these read QEQS…QDLK and PTTT…FKNK. 9 consecutive transmembrane segments (helical) span residues 382 to 402, 416 to 436, 471 to 491, 499 to 519, 529 to 551, 591 to 611, 620 to 640, 655 to 675, and 700 to 720; these read LKLG…IILF, FVST…VWLW, ASFL…TVTG, PAQV…FFPF, LLFI…RALF, SIAL…QCIL, IHLG…FSAL, ILWC…DVVV, and WSYY…TLTI. The region spanning 585–785 is the EXS domain; it reads RCNQVNSIAL…KNEVPKVESP (201 aa). The tract at residues 793 to 871 is disordered; the sequence is SSYPYRQDNF…NNSPSGSNSS (79 aa).

It belongs to the SYG1 (TC 2.A.94) family.

It localises to the membrane. In Dictyostelium discoideum (Social amoeba), this protein is SPX and EXS domain-containing protein 1.